The following is a 419-amino-acid chain: Peptide chain release factor subunit 1 (419 aa).

The protein belongs to the eukaryotic release factor 1 family. Heterodimer of two subunits, one of which binds GTP.

It is found in the cytoplasm. Directs the termination of nascent peptide synthesis (translation) in response to the termination codons UAA, UAG and UGA. This Methanococcus maripaludis (strain C7 / ATCC BAA-1331) protein is Peptide chain release factor subunit 1.